We begin with the raw amino-acid sequence, 115 residues long: ATP-dependent Clp protease adapter protein ClpS (115 aa).

The protein belongs to the ClpS family. In terms of assembly, binds to the N-terminal domain of the chaperone ClpA.

Functionally, involved in the modulation of the specificity of the ClpAP-mediated ATP-dependent protein degradation. The polypeptide is ATP-dependent Clp protease adapter protein ClpS (Leptothrix cholodnii (strain ATCC 51168 / LMG 8142 / SP-6) (Leptothrix discophora (strain SP-6))).